We begin with the raw amino-acid sequence, 606 residues long: ATP-dependent RNA helicase DBP6 (606 aa).

Disordered regions lie at residues 1 to 88 (MFSQ…PEVD) and 101 to 124 (KFKQ…EDAN). Acidic residues-rich tracts occupy residues 35-71 (DESS…EDED), 78-88 (NMEIDSQPEVD), and 109-124 (ETIE…EDAN). A Q motif motif is present at residues 169–197 (KAFTDFKSSSFMIKNLEKMGFTEAFSVQI). In terms of domain architecture, Helicase ATP-binding spans 211-393 (KLKPDRVGDI…SLKFYNPRLI (183 aa)). 224-231 (ASTGSGKT) contacts ATP. The short motif at 331 to 334 (DEAD) is the DEAD box element. The 156-residue stretch at 430–585 (ILTKFLISTN…NVDLNVKELI (156 aa)) folds into the Helicase C-terminal domain.

Belongs to the DEAD box helicase family. DDX51/DBP6 subfamily. Associated with pre-ribosomal particles.

The protein localises to the nucleus. Its subcellular location is the nucleolus. The enzyme catalyses ATP + H2O = ADP + phosphate + H(+). ATP-binding RNA helicase involved in the biogenesis of 60S ribosomal subunits and is required for the normal formation of 25S and 5.8S rRNAs. The protein is ATP-dependent RNA helicase DBP6 (DBP6) of Candida albicans (strain SC5314 / ATCC MYA-2876) (Yeast).